A 422-amino-acid chain; its full sequence is Nuclear hormone receptor family member nhr-54 (422 aa).

The segment at residues 14–92 is a DNA-binding region (nuclear receptor); the sequence is SVKCAICYKA…LGMTTENVRT (79 aa). NR C4-type zinc fingers lie at residues 17-37 and 53-80; these read CAIC…CRAC and CTRK…FKKC. The NR LBD domain occupies 161–422; the sequence is PDDDVIVELN…VFTEPEFFRV (262 aa).

This sequence belongs to the nuclear hormone receptor family.

It is found in the nucleus. Functionally, orphan nuclear receptor. The sequence is that of Nuclear hormone receptor family member nhr-54 (nhr-54) from Caenorhabditis elegans.